A 209-amino-acid chain; its full sequence is Dephospho-CoA kinase (209 aa).

Positions 13-209 (RIGLTGGIAT…AIEKVVVAEN (197 aa)) constitute a DPCK domain. An ATP-binding site is contributed by 21 to 26 (ATGKST).

This sequence belongs to the CoaE family.

The protein localises to the cytoplasm. It catalyses the reaction 3'-dephospho-CoA + ATP = ADP + CoA + H(+). Its pathway is cofactor biosynthesis; coenzyme A biosynthesis; CoA from (R)-pantothenate: step 5/5. Catalyzes the phosphorylation of the 3'-hydroxyl group of dephosphocoenzyme A to form coenzyme A. In Synechococcus elongatus (strain ATCC 33912 / PCC 7942 / FACHB-805) (Anacystis nidulans R2), this protein is Dephospho-CoA kinase.